Consider the following 178-residue polypeptide: Small ribosomal subunit protein uS4 (178 aa).

The 63-residue stretch at 104–166 (RRLQTMVYKK…PNSPMASENH (63 aa)) folds into the S4 RNA-binding domain. The interval 157 to 178 (PNSPMASENHPERTAAVSEENQ) is disordered.

It belongs to the universal ribosomal protein uS4 family. As to quaternary structure, part of the 30S ribosomal subunit. Contacts protein S5. The interaction surface between S4 and S5 is involved in control of translational fidelity.

One of the primary rRNA binding proteins, it binds directly to 16S rRNA where it nucleates assembly of the body of the 30S subunit. Its function is as follows. With S5 and S12 plays an important role in translational accuracy. This chain is Small ribosomal subunit protein uS4, found in Methanococcus maripaludis (strain C7 / ATCC BAA-1331).